A 419-amino-acid chain; its full sequence is MDKLIINGGRKLKGEVTVSGSKNASLPICIAAVLAPGASTITNVPRLRDITTTAKLLESLGATIERHENTMRIDAGTINTVEATYDLVKTMRASVLVLGPLLARFGRSRVSLPGGCAIGARPIDQHLKGLKALGAEIRLEHGYVEAIAKKGLKGARINFDVSTVGGTEHLMMAAAIAKGESILENAAREPEIADLADYLNRMGAKVEGAGTDTIRIQGVSELTPAAYEVMPDRIEAGTFMCAAAITGGDIKINGMKLEHLDALTFKLMDAGVEITNRNGVVRVKGPKRPQAVNIKTRPYPGFATDMQAQFMALMCVAEGASVISENIFENRFMHVSELLRFGADITVEGNSATVKGVKKLSGAPVMATDLRASACLVLAGLAAEGTTEIQRIYHLDRGYEQIETKLAGLGADIQRVSEP.

Phosphoenolpyruvate is bound at residue 22 to 23 (KN). Arginine 92 provides a ligand contact to UDP-N-acetyl-alpha-D-glucosamine. Cysteine 116 acts as the Proton donor in catalysis. At cysteine 116 the chain carries 2-(S-cysteinyl)pyruvic acid O-phosphothioketal. Residues 121–125 (RPIDQ), aspartate 305, and isoleucine 327 contribute to the UDP-N-acetyl-alpha-D-glucosamine site.

Belongs to the EPSP synthase family. MurA subfamily.

It is found in the cytoplasm. The catalysed reaction is phosphoenolpyruvate + UDP-N-acetyl-alpha-D-glucosamine = UDP-N-acetyl-3-O-(1-carboxyvinyl)-alpha-D-glucosamine + phosphate. The protein operates within cell wall biogenesis; peptidoglycan biosynthesis. In terms of biological role, cell wall formation. Adds enolpyruvyl to UDP-N-acetylglucosamine. The sequence is that of UDP-N-acetylglucosamine 1-carboxyvinyltransferase from Trichlorobacter lovleyi (strain ATCC BAA-1151 / DSM 17278 / SZ) (Geobacter lovleyi).